The sequence spans 757 residues: MDVNPTLLFLKVPAQNAISTTFPYTGDPPYSHGTGTGYTMDTVNRTHQYSEKGRWTTNTETGAPQLNPIDGPLPEDNEPSGYAQTDCVLEAMAFLEESHPGIFENSCIETMEVVQQTRVDKLTQGRQTYDWTLNRNQPAATALANTIEVFRSNGLTANESGRLIDFLKDVMESMNKEEMGITTHFQRKRRVRDNMTKKMITQRTMGKKKQRLNKRSYLIRALTLNTMTKDAERGKLKRRAIATPGMQIRGFVYFVETLARSICEKLEQSGLPVGGNEKKAKLANVVRKMMTNSQDTELSFTITGDNTKWNENQNPRMFLAMITYMTRNQPEWFRNVLSIAPIMFSNKMARLGKGYMFESKSMKLRTQIPAEMLASIDLKYFNDSTRKKIEKIRPLLIEGTASLSPGMMMGMFNMLSTVLGVSILNLGQKRYTKTTYWWDGLQSSDDFALIVNAPNHEGIQAGVDRFYRTCKLLGINMSKKKSYINRTGTFEFTSFFYRYGFVANFSMELPSFGVSGINESADMSIGVTVIKNNMINNDLGPATAQMALQLFIKDYRYTYRCHRGDTQIQTRRSFEIKKLWEQTRSKAGLLVSDGGPNLYNIRNLHIPEVCLKWELMDEDYQGRLCNPLNPFVSHKEIESMNNAVMMPAHGPAKNMEYDAVATTHSWIPKRNRSILNTSQRGVLEDEQMYQRCCNLFEKFFPSSSYRRPVGISSMVEAMVSRARIDTRIDFESGRIKKEEFTEIMKICSTIEELRRQK.

Residues 53–82 (GRWTTNTETGAPQLNPIDGPLPEDNEPSGY) are disordered. Over residues 55 to 64 (WTTNTETGAP) the composition is skewed to polar residues. Short sequence motifs (nuclear localization signal) lie at residues 187 to 195 (RKRRVRDNM) and 203 to 216 (RTMGKKKQRLNKRS). The promoter-binding site stretch occupies residues 249–256 (RGFVYFVE). A RdRp catalytic domain is found at 286–483 (VRKMMTNSQD…GINMSKKKSY (198 aa)).

It belongs to the influenza viruses polymerase PB1 family. Influenza RNA polymerase is composed of three subunits: PB1, PB2 and PA. Interacts (via N-terminus) with PA (via C-terminus). Interacts (via C-terminus) with PB2 (via N-terminus); this interaction is essential for transcription initiation. Interacts (via C-terminus) with human PKP2 (via N-terminus); the interaction competitively inhibits the interaction between the RNA polymerase subunits PB1 and PB2. Phosphorylated by host PRKCA.

It localises to the host nucleus. It is found in the host cytoplasm. It carries out the reaction RNA(n) + a ribonucleoside 5'-triphosphate = RNA(n+1) + diphosphate. Its function is as follows. RNA-dependent RNA polymerase which is responsible for replication and transcription of virus RNA segments. The transcription of viral mRNAs occurs by a unique mechanism called cap-snatching. 5' methylated caps of cellular mRNAs are cleaved after 10-13 nucleotides by PA. In turn, these short capped RNAs are used as primers by PB1 for transcription of viral mRNAs. During virus replication, PB1 initiates RNA synthesis and copy vRNA into complementary RNA (cRNA) which in turn serves as a template for the production of more vRNAs. The chain is RNA-directed RNA polymerase catalytic subunit from Influenza A virus (strain A/Russia:St.Petersburg/8/2006 H1N1).